A 359-amino-acid chain; its full sequence is Protein FAM50 homolog (359 aa).

Disordered regions lie at residues 122 to 150 (NLDDDEEEEEEDDEDHDKKQLKIKQEDQP) and 339 to 359 (PYDPTKSYDKYTIKDKDKSKK). A compositionally biased stretch (acidic residues) spans 123 to 136 (LDDDEEEEEEDDED). A compositionally biased stretch (basic and acidic residues) spans 137-150 (HDKKQLKIKQEDQP).

This sequence belongs to the FAM50 family.

In Drosophila melanogaster (Fruit fly), this protein is Protein FAM50 homolog.